The primary structure comprises 462 residues: Elongation factor 1-alpha 1 (462 aa).

The residue at position 2 (glycine 2) is a N,N,N-trimethylglycine. One can recognise a tr-type G domain in the interval 5-242; that stretch reads KTHINIVVIG…DCILPPTRPT (238 aa). Positions 14-21 are G1; the sequence is GHVDSGKS. GTP is bound at residue 14-21; it reads GHVDSGKS. Lysine 36 is subject to N6,N6,N6-trimethyllysine; alternate. Lysine 36 carries the post-translational modification N6,N6-dimethyllysine; alternate. An N6-methyllysine; alternate modification is found at lysine 36. The residue at position 55 (lysine 55) is an N6,N6-dimethyllysine. The tract at residues 70-74 is G2; that stretch reads GITID. At lysine 79 the chain carries N6,N6,N6-trimethyllysine; by EEF1AKMT1. Residues 91–94 are G3; the sequence is DAPG. 153–156 is a GTP binding site; the sequence is NKMD. The G4 stretch occupies residues 153–156; the sequence is NKMD. Lysine 165 bears the N6,N6,N6-trimethyllysine; alternate; by EEF1AKMT3 mark. At lysine 165 the chain carries N6,N6-dimethyllysine; alternate; by EEF1AKMT3. Lysine 165 bears the N6-acetyllysine; alternate mark. Residue lysine 165 is modified to N6-methyllysine; alternate; by EEF1AKMT3. The residue at position 172 (lysine 172) is an N6-acetyllysine. Residue 194–196 coordinates GTP; sequence SGW. The interval 194–196 is G5; it reads SGW. Residue lysine 273 is modified to N6-acetyllysine. Serine 300 carries the post-translational modification Phosphoserine; by TGFBR1. Glutamate 301 carries the post-translational modification 5-glutamyl glycerylphosphorylethanolamine. Lysine 318 is modified (N6,N6,N6-trimethyllysine; by EEF1AKMT2). At glutamate 374 the chain carries 5-glutamyl glycerylphosphorylethanolamine. A Glycyl lysine isopeptide (Lys-Gly) (interchain with G-Cter in ubiquitin) cross-link involves residue lysine 385. Lysine 392 bears the N6-acetyllysine; alternate mark. N6-succinyllysine; alternate is present on lysine 392. Threonine 432 is modified (phosphothreonine; by PASK). Lysine 439 is subject to N6-acetyllysine.

Belongs to the TRAFAC class translation factor GTPase superfamily. Classic translation factor GTPase family. EF-Tu/EF-1A subfamily. As to quaternary structure, found in a nuclear export complex with XPO5, EEF1A1, Ran and aminoacylated tRNA. Interacts with PARP1 and TXK. Interacts with KARS1. May interact with ERGIC2. Interacts with IFIT1 (via TPR repeats 4-7). Interacts with DLC1, facilitating distribution to the membrane periphery and ruffles upon growth factor stimulation. Interacts with ZPR1; the interaction occurs in a epidermal growth factor (EGF)-dependent manner. Interacts with PPP1R16B. Interacts with SPHK1 and SPHK2; both interactions increase SPHK1 and SPHK2 kinase activity. Interacts with guanyl-nucleotide exchange factor EEF1B2. Interacts (via middle-region) with HTATIP2 (via N-terminus); the interaction is direct and competes with EEF1A1 binding to guanyl-nucleotide exchange factor EEF1B2, thereby inhibiting GDP for GTP exchange and reactivation of EEF1A1. Interacts with tRNA. ISGylated. Post-translationally, phosphorylated by TXK. Phosphorylation by PASK increases translation efficiency. Phosphorylated by ROCK2. Phosphorylation by TGFBR1 inhibits translation elongation. In terms of processing, trimethylated at Lys-79 by EEF1AKMT1. Methylated at Lys-165 by EEF1AKMT3, methylation by EEF1AKMT3 is dynamic as well as inducible by stress conditions, such as ER-stress, and plays a regulatory role on mRNA translation. Trimethylated at Lys-318 by EEF1AKMT2. Mono-, di-, and trimethylated at Lys-36 by EEF1AKMT4; trimethylated form is predominant. Methylation by EEF1AKMT4 contributes to the fine-tuning of translation rates for a subset of tRNAs. Trimethylated at Gly-2 by METTL13. Mono- and dimethylated at Lys-55 by METTL13; dimethylated form is predominant. Ubiquitinated at Lys-385 by RNF14 in response to ribosome collisions (ribosome stalling), leading to its degradation by the proteasome and rescue of stalled ribosomes.

It localises to the cytoplasm. Its subcellular location is the nucleus. The protein localises to the nucleolus. The protein resides in the cell membrane. The enzyme catalyses GTP + H2O = GDP + phosphate + H(+). Translation elongation factor that catalyzes the GTP-dependent binding of aminoacyl-tRNA (aa-tRNA) to the A-site of ribosomes during the elongation phase of protein synthesis. Base pairing between the mRNA codon and the aa-tRNA anticodon promotes GTP hydrolysis, releasing the aa-tRNA from EEF1A1 and allowing its accommodation into the ribosome. The growing protein chain is subsequently transferred from the P-site peptidyl tRNA to the A-site aa-tRNA, extending it by one amino acid through ribosome-catalyzed peptide bond formation. Also plays a role in the positive regulation of IFNG transcription in T-helper 1 cells as part of an IFNG promoter-binding complex with TXK and PARP1. Also plays a role in cytoskeleton organization by promoting actin bundling. The polypeptide is Elongation factor 1-alpha 1 (EEF1A1) (Bos taurus (Bovine)).